Consider the following 770-residue polypeptide: Cyclopiane-type diterpene synthase (770 aa).

The segment at 5–335 (ITDEYAVGID…VPRYCKVDRN (331 aa)) is terpene cyclase. Mg(2+)-binding residues include aspartate 97 and aspartate 101. Substrate contacts are provided by residues aspartate 97, aspartate 101, 190-193 (RIVD), asparagine 234, 238-242 (SWDKE), and 328-329 (RY). The DDXXD 1 motif lies at 97–101 (DDETD). Residues 234-242 (NDLFSWDKE) carry the NSE/DTE motif. Residues 336–720 (PYKDHLEKYG…WALRLLIMKL (385 aa)) are prenyltransferase. A disordered region spans residues 371 to 397 (NQLKEPSSSTYKTHFSPLEPNPGPEQT). Positions 374 to 383 (KEPSSSTYKT) are enriched in polar residues. Residues lysine 423, arginine 426, and histidine 455 each contribute to the isopentenyl diphosphate site. Residues aspartate 462 and aspartate 466 each contribute to the Mg(2+) site. Residues 462 to 466 (DDIQD) carry the DDXXD 2 motif. Dimethylallyl diphosphate is bound at residue arginine 471. An isopentenyl diphosphate-binding site is contributed by arginine 472. Dimethylallyl diphosphate contacts are provided by lysine 548, threonine 549, glutamine 584, asparagine 591, lysine 620, and lysine 630.

The protein in the N-terminal section; belongs to the terpene synthase family. It in the C-terminal section; belongs to the FPP/GGPP synthase family. As to quaternary structure, hexamer. Mg(2+) is required as a cofactor.

It carries out the reaction isopentenyl diphosphate + (2E,6E)-farnesyl diphosphate = (2E,6E,10E)-geranylgeranyl diphosphate + diphosphate. The enzyme catalyses (2E,6E,10E)-geranylgeranyl diphosphate + H2O = (+)-penichrysol + diphosphate. The protein operates within secondary metabolite biosynthesis; terpenoid biosynthesis. Its function is as follows. Bifunctional terpene synthase converts dimethylallyl diphosphate (DMAPP) and isopentenyl diphosphate (IPP) into a cyclopiane-type diterpene. The C-terminal prenyltransferase (PT) domain of PcCS catalyzes formation of geranylgeranyl pyrophosphate (GGPP), whereas the N-terminal terpene cyclase (TC) domain catalyzes the cyclization of GGPP to the cyclopiane-type diterpene penichrysol. In Penicillium chrysogenum (Penicillium notatum), this protein is Cyclopiane-type diterpene synthase.